The chain runs to 363 residues: Aminomethyltransferase (363 aa).

It belongs to the GcvT family. As to quaternary structure, the glycine cleavage system is composed of four proteins: P, T, L and H.

It carries out the reaction N(6)-[(R)-S(8)-aminomethyldihydrolipoyl]-L-lysyl-[protein] + (6S)-5,6,7,8-tetrahydrofolate = N(6)-[(R)-dihydrolipoyl]-L-lysyl-[protein] + (6R)-5,10-methylene-5,6,7,8-tetrahydrofolate + NH4(+). Its function is as follows. The glycine cleavage system catalyzes the degradation of glycine. This is Aminomethyltransferase from Staphylococcus haemolyticus (strain JCSC1435).